The following is a 358-amino-acid chain: DNA replication and repair protein RecF (358 aa).

Residue 30 to 37 (GANGSGKT) coordinates ATP.

The protein belongs to the RecF family.

It is found in the cytoplasm. Its function is as follows. The RecF protein is involved in DNA metabolism; it is required for DNA replication and normal SOS inducibility. RecF binds preferentially to single-stranded, linear DNA. It also seems to bind ATP. This is DNA replication and repair protein RecF from Edwardsiella ictaluri (strain 93-146).